The primary structure comprises 363 residues: NADH-quinone oxidoreductase subunit H (363 aa).

10 helical membrane passes run 29–49, 62–82, 96–116, 127–147, 163–183, 202–222, 239–257, 264–286, 299–319, and 339–359; these read VLKI…YVVW, GPMY…KLLF, FIIA…VVPF, VGLL…ILAG, AAQV…VMIA, FFDW…VSGV, IVAG…LFFL, ILVS…QGWV, TGGW…YIWF, and FIPL…YGVI.

Belongs to the complex I subunit 1 family. As to quaternary structure, NDH-1 is composed of 14 different subunits. Subunits NuoA, H, J, K, L, M, N constitute the membrane sector of the complex.

Its subcellular location is the cell inner membrane. It catalyses the reaction a quinone + NADH + 5 H(+)(in) = a quinol + NAD(+) + 4 H(+)(out). NDH-1 shuttles electrons from NADH, via FMN and iron-sulfur (Fe-S) centers, to quinones in the respiratory chain. The immediate electron acceptor for the enzyme in this species is believed to be ubiquinone. Couples the redox reaction to proton translocation (for every two electrons transferred, four hydrogen ions are translocated across the cytoplasmic membrane), and thus conserves the redox energy in a proton gradient. This subunit may bind ubiquinone. The protein is NADH-quinone oxidoreductase subunit H of Xanthomonas campestris pv. campestris (strain B100).